A 173-amino-acid chain; its full sequence is MAEKRNIFLVGPMGAGKSTIGRQLAQQLNMEFFDSDQEIERRTGADVGWVFDVEGEEGFRDREEKVINELTEKQGIVLATGGGSVKSRETRNRLSARGVVVYLETTIEKQLARTQRDKKRPLLQVDEPPREVLEALAKERNPLYEEIADVTIRTDDQSAKVVANQIINMLESN.

14-19 (GAGKST) lines the ATP pocket. A Mg(2+)-binding site is contributed by S18. Residues D36, R60, and G82 each contribute to the substrate site. R120 provides a ligand contact to ATP. R140 is a substrate binding site. An ATP-binding site is contributed by Q157.

Belongs to the shikimate kinase family. As to quaternary structure, monomer. Requires Mg(2+) as cofactor.

It is found in the cytoplasm. The enzyme catalyses shikimate + ATP = 3-phosphoshikimate + ADP + H(+). Its pathway is metabolic intermediate biosynthesis; chorismate biosynthesis; chorismate from D-erythrose 4-phosphate and phosphoenolpyruvate: step 5/7. Functionally, catalyzes the specific phosphorylation of the 3-hydroxyl group of shikimic acid using ATP as a cosubstrate. This Yersinia pseudotuberculosis serotype O:1b (strain IP 31758) protein is Shikimate kinase 1.